The sequence spans 345 residues: Viral Fc-gamma receptor-like protein UL119 (345 aa).

The first 23 residues, 1 to 23 (MCSVLAIALVVALLGDMHPGVKS), serve as a signal peptide directing secretion. Residues 23 to 42 (SSTTSAVTSPSNTTVTSTTS) are disordered. Residues 24–294 (STTSAVTSPS…KSDPLFEDRL (271 aa)) are Virion surface-facing. 12 N-linked (GlcNAc...) asparagine; by host glycosylation sites follow: Asn-34, Asn-48, Asn-95, Asn-104, Asn-148, Asn-179, Asn-198, Asn-217, Asn-225, Asn-241, Asn-244, and Asn-260. Positions 91-190 (QVSLNATCKV…TWDLFTYPIY (100 aa)) constitute an Ig-like V-type domain. The helical transmembrane segment at 295-317 (LAYGVLAFLVFMVIILLYVTYML) threads the bilayer. Residues 318-345 (ARRRDWSYKRLEEPVEEKKHPVPYFKQW) lie on the Intravirion side of the membrane.

It localises to the virion membrane. In terms of biological role, serves as a receptor for the Fc part of human IgG. May thus be involved in interfering with host Ig-mediated immune responses. In Human cytomegalovirus (strain AD169) (HHV-5), this protein is Viral Fc-gamma receptor-like protein UL119 (UL119/UL118).